A 298-amino-acid chain; its full sequence is UPF0282 protein Kcr_0286 (298 aa).

It belongs to the UPF0282 family.

The chain is UPF0282 protein Kcr_0286 from Korarchaeum cryptofilum (strain OPF8).